Reading from the N-terminus, the 361-residue chain is DNA double-strand break repair protein Mre11 (361 aa).

Residues Asp-7, His-9, Asp-48, and Asn-83 each contribute to the Mn(2+) site. The Proton donor role is filled by His-84. His-176, His-204, and His-206 together coordinate Mn(2+).

Belongs to the MRE11/RAD32 family. As to quaternary structure, homodimer. Forms a heterotetramer composed of two Mre11 subunits and two Rad50 subunits. Mn(2+) is required as a cofactor.

Nuclease activity is regulated by Rad50. In terms of biological role, part of the Rad50/Mre11 complex, which is involved in the early steps of DNA double-strand break (DSB) repair. The complex may facilitate opening of the processed DNA ends to aid in the recruitment of HerA and NurA. Mre11 binds to DSB ends and has both double-stranded 3'-5' exonuclease activity and single-stranded endonuclease activity. The sequence is that of DNA double-strand break repair protein Mre11 from Nanoarchaeum equitans (strain Kin4-M).